The sequence spans 249 residues: UPF0758 protein BMEI0718 (249 aa).

Positions methionine 1 to histidine 34 are disordered. Over residues proline 24 to histidine 34 the composition is skewed to basic and acidic residues. Positions valine 127–isoleucine 249 constitute an MPN domain. 3 residues coordinate Zn(2+): histidine 198, histidine 200, and aspartate 211. The short motif at histidine 198–aspartate 211 is the JAMM motif element.

This sequence belongs to the UPF0758 family.

This chain is UPF0758 protein BMEI0718, found in Brucella melitensis biotype 1 (strain ATCC 23456 / CCUG 17765 / NCTC 10094 / 16M).